Consider the following 125-residue polypeptide: Ribonuclease P protein component (125 aa).

Belongs to the RnpA family. Consists of a catalytic RNA component (M1 or rnpB) and a protein subunit.

The enzyme catalyses Endonucleolytic cleavage of RNA, removing 5'-extranucleotides from tRNA precursor.. RNaseP catalyzes the removal of the 5'-leader sequence from pre-tRNA to produce the mature 5'-terminus. It can also cleave other RNA substrates such as 4.5S RNA. The protein component plays an auxiliary but essential role in vivo by binding to the 5'-leader sequence and broadening the substrate specificity of the ribozyme. The protein is Ribonuclease P protein component of Clostridium botulinum (strain Alaska E43 / Type E3).